The following is a 273-amino-acid chain: HMP-PP phosphatase (273 aa).

Asp-8 functions as the Nucleophile in the catalytic mechanism. Positions 8, 10, and 212 each coordinate Mg(2+).

This sequence belongs to the HAD-like hydrolase superfamily. Cof family. Requires Mg(2+) as cofactor.

It catalyses the reaction 4-amino-2-methyl-5-(diphosphooxymethyl)pyrimidine + H2O = 4-amino-2-methyl-5-(phosphooxymethyl)pyrimidine + phosphate + H(+). In terms of biological role, catalyzes the hydrolysis of 4-amino-2-methyl-5-hydroxymethylpyrimidine pyrophosphate (HMP-PP) to 4-amino-2-methyl-5-hydroxymethylpyrimidine phosphate (HMP-P). The sequence is that of HMP-PP phosphatase from Yersinia pseudotuberculosis serotype O:1b (strain IP 31758).